Reading from the N-terminus, the 624-residue chain is Diatom spindle kinesin-1 (624 aa).

Residues 1 to 59 are disordered; that stretch reads MNAANRRKSTSTVGITGRKDATRMKIEQMEKERKERRKTMMQRKEARKQEHMKNIEAGN. The tract at residues 1 to 85 is globular; sequence MNAANRRKST…QENKIGDKSP (85 aa). Composition is skewed to basic and acidic residues over residues 17–33 and 42–54; these read GRKD…EKER and QRKE…HMKN. Residues 95–411 enclose the Kinesin motor domain; sequence NICIAVRKRP…LRYADRIKEQ (317 aa). 186–193 contributes to the ATP binding site; sequence GQTGSGKT. A coiled-coil region spans residues 426-624; it reads SNREIMPSKE…LARQVQLTQY (199 aa). Acidic residues predominate over residues 478–511; the sequence is VDEEEADDEEGDYEEESEDLDYEDSEGQDYEEAV. Residues 478-528 form a disordered region; the sequence is VDEEEADDEEGDYEEESEDLDYEDSEGQDYEEAVESQYDHSQEAQEGEEEL.

The protein belongs to the TRAFAC class myosin-kinesin ATPase superfamily. Kinesin family. MCAK/KIF2 subfamily.

The protein resides in the cytoplasm. The protein localises to the cytoskeleton. In terms of biological role, involved in anaphase spindle elongation. In Cylindrotheca fusiformis (Marine diatom), this protein is Diatom spindle kinesin-1 (DSK1).